Reading from the N-terminus, the 448-residue chain is Homogentisate 1,2-dioxygenase (448 aa).

The active-site Proton acceptor is the His-303. The Fe cation site is built by His-346 and Glu-352. Positions 361 and 382 each coordinate homogentisate. His-382 serves as a coordination point for Fe cation.

It belongs to the homogentisate dioxygenase family. Hexamer; dimer of trimers. Fe cation is required as a cofactor.

The enzyme catalyses homogentisate + O2 = 4-maleylacetoacetate + H(+). It functions in the pathway amino-acid degradation; L-phenylalanine degradation; acetoacetate and fumarate from L-phenylalanine: step 4/6. Its function is as follows. Involved in the catabolism of homogentisate (2,5-dihydroxyphenylacetate or 2,5-OH-PhAc), a central intermediate in the degradation of phenylalanine and tyrosine. Catalyzes the oxidative ring cleavage of the aromatic ring of homogentisate to yield maleylacetoacetate. This is Homogentisate 1,2-dioxygenase from Rhodopseudomonas palustris (strain BisB5).